Here is a 258-residue protein sequence, read N- to C-terminus: Ribosome maturation factor RimP (258 aa).

Disordered stretches follow at residues 48–88 and 212–258; these read PQRP…PTSA and IFKK…AEND. Residues 215–224 show a composition bias toward basic residues; the sequence is KPQKPGKKPG.

This sequence belongs to the RimP family.

The protein resides in the cytoplasm. Functionally, required for maturation of 30S ribosomal subunits. This Desulfovibrio desulfuricans (strain ATCC 27774 / DSM 6949 / MB) protein is Ribosome maturation factor RimP.